A 392-amino-acid chain; its full sequence is DNA primase small subunit PriS (392 aa).

Residues Asp98, Asp100, and Asp295 contribute to the active site.

It belongs to the eukaryotic-type primase small subunit family. In terms of assembly, heterodimer of a small subunit (PriS) and a large subunit (PriL). It depends on Mg(2+) as a cofactor. The cofactor is Mn(2+).

Catalytic subunit of DNA primase, an RNA polymerase that catalyzes the synthesis of short RNA molecules used as primers for DNA polymerase during DNA replication. The small subunit contains the primase catalytic core and has DNA synthesis activity on its own. Binding to the large subunit stabilizes and modulates the activity, increasing the rate of DNA synthesis while decreasing the length of the DNA fragments, and conferring RNA synthesis capability. The DNA polymerase activity may enable DNA primase to also catalyze primer extension after primer synthesis. May also play a role in DNA repair. The chain is DNA primase small subunit PriS from Haloarcula marismortui (strain ATCC 43049 / DSM 3752 / JCM 8966 / VKM B-1809) (Halobacterium marismortui).